Here is a 121-residue protein sequence, read N- to C-terminus: Large ribosomal subunit protein uL18 (121 aa).

Positions 63 to 88 are disordered; the sequence is AAIRPDPSPKKSQKQPPKTHKRYNLK. The span at 73–87 shows a compositional bias: basic residues; it reads KSQKQPPKTHKRYNL.

The protein belongs to the universal ribosomal protein uL18 family. Component of the large ribosomal subunit (LSU).

The protein localises to the cytoplasm. Its subcellular location is the nucleus. In terms of biological role, component of the ribosome, a large ribonucleoprotein complex responsible for the synthesis of proteins in the cell. The small ribosomal subunit (SSU) binds messenger RNAs (mRNAs) and translates the encoded message by selecting cognate aminoacyl-transfer RNA (tRNA) molecules. The large subunit (LSU) contains the ribosomal catalytic site termed the peptidyl transferase center (PTC), which catalyzes the formation of peptide bonds, thereby polymerizing the amino acids delivered by tRNAs into a polypeptide chain. The nascent polypeptides leave the ribosome through a tunnel in the LSU and interact with protein factors that function in enzymatic processing, targeting, and the membrane insertion of nascent chains at the exit of the ribosomal tunnel. The protein is Large ribosomal subunit protein uL18 (RPL5) of Solanum melongena (Eggplant).